A 242-amino-acid chain; its full sequence is DNA repair protein RecO (242 aa).

Belongs to the RecO family.

Its function is as follows. Involved in DNA repair and RecF pathway recombination. The protein is DNA repair protein RecO of Xanthobacter autotrophicus (strain ATCC BAA-1158 / Py2).